The sequence spans 237 residues: DNA repair protein RecO (237 aa).

It belongs to the RecO family.

Involved in DNA repair and RecF pathway recombination. The sequence is that of DNA repair protein RecO from Rickettsia africae (strain ESF-5).